The sequence spans 466 residues: Methylenetetrahydrofolate--tRNA-(uracil-5-)-methyltransferase TrmFO (466 aa).

14-19 contacts FAD; that stretch reads GGGLAG.

The protein belongs to the MnmG family. TrmFO subfamily. It depends on FAD as a cofactor.

Its subcellular location is the cytoplasm. It carries out the reaction uridine(54) in tRNA + (6R)-5,10-methylene-5,6,7,8-tetrahydrofolate + NADH + H(+) = 5-methyluridine(54) in tRNA + (6S)-5,6,7,8-tetrahydrofolate + NAD(+). The catalysed reaction is uridine(54) in tRNA + (6R)-5,10-methylene-5,6,7,8-tetrahydrofolate + NADPH + H(+) = 5-methyluridine(54) in tRNA + (6S)-5,6,7,8-tetrahydrofolate + NADP(+). Functionally, catalyzes the folate-dependent formation of 5-methyl-uridine at position 54 (M-5-U54) in all tRNAs. The sequence is that of Methylenetetrahydrofolate--tRNA-(uracil-5-)-methyltransferase TrmFO from Brucella melitensis biotype 1 (strain ATCC 23456 / CCUG 17765 / NCTC 10094 / 16M).